The primary structure comprises 183 residues: Dual-action ribosomal maturation protein DarP (183 aa).

The tract at residues Met-1 to Val-27 is disordered. The segment covering Val-9–Glu-18 has biased composition (acidic residues).

Belongs to the DarP family.

Its subcellular location is the cytoplasm. Its function is as follows. Member of a network of 50S ribosomal subunit biogenesis factors which assembles along the 30S-50S interface, preventing incorrect 23S rRNA structures from forming. Promotes peptidyl transferase center (PTC) maturation. This is Dual-action ribosomal maturation protein DarP from Bordetella pertussis (strain Tohama I / ATCC BAA-589 / NCTC 13251).